The sequence spans 62 residues: Short neurotoxin B (62 aa).

Polar residues predominate over residues 1–16 (RRCFNHPSSQPQTNKS). The interval 1–21 (RRCFNHPSSQPQTNKSCPPGE) is disordered. 4 disulfide bridges follow: Cys-3–Cys-24, Cys-17–Cys-41, Cys-43–Cys-54, and Cys-55–Cys-60.

This sequence belongs to the three-finger toxin family. Short-chain subfamily. Type I alpha-neurotoxin sub-subfamily. As to expression, expressed by the venom gland.

The protein resides in the secreted. Binds to muscle nicotinic acetylcholine receptor (nAChR) and inhibit acetylcholine from binding to the receptor, thereby impairing neuromuscular transmission. The chain is Short neurotoxin B from Laticauda crockeri (Crocker's sea snake).